A 239-amino-acid polypeptide reads, in one-letter code: Diablo IAP-binding mitochondrial protein (239 aa).

A mitochondrion-targeting transit peptide spans 1-22; the sequence is MAVLKSWLSRSVTLLFRYRQCL. The IAP-binding motif lies at 56–60; sequence AVPIA. Positions 217–239 are disordered; that stretch reads RQKTQEEGEERAESEQEAYLRED.

It belongs to the Smac/DIABLO protein family. In terms of assembly, homodimer. Interacts with BEX3. Interacts with BIRC2/c-IAP1 (via BIR3 domain). Interacts with BIRC6/BRUCE. Interacts with BIRC7/livin. Interacts with XIAP/BIRC4 (via BIR3 domain). Interacts with the monomeric and dimeric form of BIRC5/survivin. Interacts with AREL1 (via HECT domain); in the cytoplasm following induction of apoptosis. Post-translationally, ubiquitinated by BIRC7/livin. Ubiquitinated by BIRC6. In terms of processing, the precursor form is proteolytically cleaved by mitochondrial processing peptidase MPP to remove the transit peptide and produce an intermediate form. This is then processed by PARL to produce the mature cleaved form which is released from mitochondria into the cytosol in apoptotic cells.

The protein localises to the mitochondrion. The protein resides in the cytoplasm. It is found in the cytosol. Promotes apoptosis by activating caspases in the cytochrome c/Apaf-1/caspase-9 pathway. Acts by opposing the inhibitory activity of inhibitor of apoptosis proteins (IAP). Inhibits the activity of BIRC6/BRUCE by inhibiting its binding to caspases. This is Diablo IAP-binding mitochondrial protein from Pongo abelii (Sumatran orangutan).